Consider the following 357-residue polypeptide: Dihydroorotate dehydrogenase (quinone) (357 aa).

FMN-binding positions include 61-65 and Thr85; that span reads AGFDK. Lys65 is a substrate binding site. 110-114 serves as a coordination point for substrate; the sequence is NRFGF. The FMN site is built by Asn141 and Asn172. Asn172 lines the substrate pocket. Ser175 acts as the Nucleophile in catalysis. Residue Asn177 coordinates substrate. Positions 217 and 245 each coordinate FMN. Residue 246 to 247 coordinates substrate; sequence NT. FMN is bound by residues Gly268, Gly297, and 318–319; that span reads YS.

It belongs to the dihydroorotate dehydrogenase family. Type 2 subfamily. In terms of assembly, monomer. It depends on FMN as a cofactor.

The protein resides in the cell membrane. It carries out the reaction (S)-dihydroorotate + a quinone = orotate + a quinol. It functions in the pathway pyrimidine metabolism; UMP biosynthesis via de novo pathway; orotate from (S)-dihydroorotate (quinone route): step 1/1. Catalyzes the conversion of dihydroorotate to orotate with quinone as electron acceptor. In Xanthobacter autotrophicus (strain ATCC BAA-1158 / Py2), this protein is Dihydroorotate dehydrogenase (quinone).